Here is a 134-residue protein sequence, read N- to C-terminus: Submaxillary gland androgen-regulated protein 3A (134 aa).

An N-terminal signal peptide occupies residues 1 to 22 (MKSLTWILGLWALAACFTPGES). The tract at residues 19–134 (PGESQRGPRG…TDPALPTPAP (116 aa)) is disordered. 3 stretches are compositionally biased toward pro residues: residues 28–43 (GPYP…PPCF), 50–85 (VPPP…PPYG), and 94–119 (LPPP…PPFF).

This sequence belongs to the PROL1/PROL3 family.

Its subcellular location is the secreted. May play a role in protection or detoxification. The chain is Submaxillary gland androgen-regulated protein 3A (SMR3A) from Homo sapiens (Human).